Here is a 339-residue protein sequence, read N- to C-terminus: DNA-directed RNA polymerase subunit alpha (339 aa).

Residues 1–233 (MVREEVAGST…DLFLPFLHAE (233 aa)) are alpha N-terminal domain (alpha-NTD). Residues 264-339 (KKGIPLNCIF…IDLLKNKLSF (76 aa)) form an alpha C-terminal domain (alpha-CTD) region.

Belongs to the RNA polymerase alpha chain family. In terms of assembly, in plastids the minimal PEP RNA polymerase catalytic core is composed of four subunits: alpha, beta, beta', and beta''. When a (nuclear-encoded) sigma factor is associated with the core the holoenzyme is formed, which can initiate transcription.

Its subcellular location is the plastid. It localises to the chloroplast. The enzyme catalyses RNA(n) + a ribonucleoside 5'-triphosphate = RNA(n+1) + diphosphate. In terms of biological role, DNA-dependent RNA polymerase catalyzes the transcription of DNA into RNA using the four ribonucleoside triphosphates as substrates. This chain is DNA-directed RNA polymerase subunit alpha, found in Thinopyrum bessarabicum (Wheatgrass).